We begin with the raw amino-acid sequence, 282 residues long: MERNVILAKNAGFCFGVKRAVDEAIKYQKEFGKKIYTLGPLIHNNDVVNYLEDNNIFAIELSDADSLKKGDVVLIRSHGVKESVIKDLTDKGLIVKNATCPYVTNIQLKVKKCYEQGYKIIIVGDKNHPEVIGINGWCNDSAIITNGKTELENIPAKVCVVSQTTEKKETWNKVLNEIVRASKEIVAFNTICSATDVRQKSVQELSKEADLVFVIGGKNSSNTTKLYEICKKECPKSYHIENVKELDESLLEDESVKTIGITAGASTPDWIINEVISKIKEL.

C14 is a binding site for [4Fe-4S] cluster. 2 residues coordinate (2E)-4-hydroxy-3-methylbut-2-enyl diphosphate: H43 and H78. Positions 43 and 78 each coordinate dimethylallyl diphosphate. Isopentenyl diphosphate contacts are provided by H43 and H78. C100 contributes to the [4Fe-4S] cluster binding site. Position 128 (H128) interacts with (2E)-4-hydroxy-3-methylbut-2-enyl diphosphate. H128 serves as a coordination point for dimethylallyl diphosphate. H128 lines the isopentenyl diphosphate pocket. The active-site Proton donor is the E130. T164 contributes to the (2E)-4-hydroxy-3-methylbut-2-enyl diphosphate binding site. C192 serves as a coordination point for [4Fe-4S] cluster. (2E)-4-hydroxy-3-methylbut-2-enyl diphosphate is bound by residues S220, S221, N222, and S266. S220, S221, N222, and S266 together coordinate dimethylallyl diphosphate. The isopentenyl diphosphate site is built by S220, S221, N222, and S266.

Belongs to the IspH family. It depends on [4Fe-4S] cluster as a cofactor.

The enzyme catalyses isopentenyl diphosphate + 2 oxidized [2Fe-2S]-[ferredoxin] + H2O = (2E)-4-hydroxy-3-methylbut-2-enyl diphosphate + 2 reduced [2Fe-2S]-[ferredoxin] + 2 H(+). The catalysed reaction is dimethylallyl diphosphate + 2 oxidized [2Fe-2S]-[ferredoxin] + H2O = (2E)-4-hydroxy-3-methylbut-2-enyl diphosphate + 2 reduced [2Fe-2S]-[ferredoxin] + 2 H(+). It functions in the pathway isoprenoid biosynthesis; dimethylallyl diphosphate biosynthesis; dimethylallyl diphosphate from (2E)-4-hydroxy-3-methylbutenyl diphosphate: step 1/1. The protein operates within isoprenoid biosynthesis; isopentenyl diphosphate biosynthesis via DXP pathway; isopentenyl diphosphate from 1-deoxy-D-xylulose 5-phosphate: step 6/6. In terms of biological role, catalyzes the conversion of 1-hydroxy-2-methyl-2-(E)-butenyl 4-diphosphate (HMBPP) into a mixture of isopentenyl diphosphate (IPP) and dimethylallyl diphosphate (DMAPP). Acts in the terminal step of the DOXP/MEP pathway for isoprenoid precursor biosynthesis. In Clostridium perfringens (strain 13 / Type A), this protein is 4-hydroxy-3-methylbut-2-enyl diphosphate reductase.